A 405-amino-acid chain; its full sequence is Argininosuccinate synthase (405 aa).

Residue 12 to 20 (AYSGGLDTS) participates in ATP binding. Residues Tyr92 and Ser97 each coordinate L-citrulline. Gly122 serves as a coordination point for ATP. Residues Thr124, Asn128, and Asp129 each contribute to the L-aspartate site. Asn128 serves as a coordination point for L-citrulline. L-citrulline-binding residues include Arg132, Ser181, Ser190, Glu266, and Tyr278.

This sequence belongs to the argininosuccinate synthase family. Type 1 subfamily. Homotetramer.

It localises to the cytoplasm. It catalyses the reaction L-citrulline + L-aspartate + ATP = 2-(N(omega)-L-arginino)succinate + AMP + diphosphate + H(+). It participates in amino-acid biosynthesis; L-arginine biosynthesis; L-arginine from L-ornithine and carbamoyl phosphate: step 2/3. This chain is Argininosuccinate synthase, found in Cronobacter sakazakii (strain ATCC BAA-894) (Enterobacter sakazakii).